A 355-amino-acid chain; its full sequence is MLASKLDPFFKRFEELNSLLSSSDILNDISKMTTLSKEQKNLEPIVLKAKEYLKTLDNIEENKALLNDPELGELAKEELKTLEELKPKLEEEIKILLLPKDPNDERNIFLEIRAGTGGDEASLFVGDLVKAYARYAENRGYKLEIVSSSEGSVGGFKEIIMLVKGTGAYSRLKYEGGTHRVQRVPQTESQGRVHTSAITVAVMPEVDDIEIEINPNDLKVDVMRSSGHGGQSVNTTDSAVRITHIPTGIVVVNQDGKSQHKNKESAMKVLKARLYEMQESERLAKESEARKSQVGSGDRSERIRTYNFPQNRISDHRINLTLYRLDAIMQDGLFDEIIEPLITHHQAQALQEQNL.

At Q231 the chain carries N5-methylglutamine. A compositionally biased stretch (basic and acidic residues) spans 280–291; that stretch reads SERLAKESEARK. The interval 280-303 is disordered; the sequence is SERLAKESEARKSQVGSGDRSERI.

Belongs to the prokaryotic/mitochondrial release factor family. Post-translationally, methylated by PrmC. Methylation increases the termination efficiency of RF1.

It localises to the cytoplasm. In terms of biological role, peptide chain release factor 1 directs the termination of translation in response to the peptide chain termination codons UAG and UAA. The chain is Peptide chain release factor 1 from Campylobacter jejuni subsp. jejuni serotype O:2 (strain ATCC 700819 / NCTC 11168).